Reading from the N-terminus, the 426-residue chain is 5-methylthioadenosine/S-adenosylhomocysteine deaminase (426 aa).

Zn(2+)-binding residues include His60 and His62. 2 residues coordinate substrate: Glu89 and His179. Residue His206 participates in Zn(2+) binding. Residues Glu209 and Asp294 each coordinate substrate. Asp294 contributes to the Zn(2+) binding site.

This sequence belongs to the metallo-dependent hydrolases superfamily. MTA/SAH deaminase family. It depends on Zn(2+) as a cofactor.

The catalysed reaction is S-adenosyl-L-homocysteine + H2O + H(+) = S-inosyl-L-homocysteine + NH4(+). It catalyses the reaction S-methyl-5'-thioadenosine + H2O + H(+) = S-methyl-5'-thioinosine + NH4(+). Catalyzes the deamination of 5-methylthioadenosine and S-adenosyl-L-homocysteine into 5-methylthioinosine and S-inosyl-L-homocysteine, respectively. Is also able to deaminate adenosine. This chain is 5-methylthioadenosine/S-adenosylhomocysteine deaminase, found in Dictyoglomus turgidum (strain DSM 6724 / Z-1310).